The following is a 183-amino-acid chain: Dual specificity protein phosphatase 22-B (183 aa).

The region spanning 4–144 (GINKVLPDLY…LQEFQTGELQ (141 aa)) is the Tyrosine-protein phosphatase domain. Cysteine 88 serves as the catalytic Phosphocysteine intermediate.

The protein belongs to the protein-tyrosine phosphatase family. Non-receptor class dual specificity subfamily.

Its subcellular location is the cytoplasm. The protein resides in the nucleus. The catalysed reaction is O-phospho-L-tyrosyl-[protein] + H2O = L-tyrosyl-[protein] + phosphate. The enzyme catalyses O-phospho-L-seryl-[protein] + H2O = L-seryl-[protein] + phosphate. It carries out the reaction O-phospho-L-threonyl-[protein] + H2O = L-threonyl-[protein] + phosphate. Functionally, activates the Jnk signaling pathway. Dephosphorylates and deactivates p38 and stress-activated protein kinase/c-Jun N-terminal kinase (SAPK/JNK). This Danio rerio (Zebrafish) protein is Dual specificity protein phosphatase 22-B (dusp22b).